A 953-amino-acid chain; its full sequence is Coatomer subunit beta (953 aa).

HEAT repeat units lie at residues 17-54, 96-131, 132-168, 240-276, 277-314, 316-353, and 396-433; these read DSEP…NGEK, QEMI…KEAE, LLEP…NFEH, SERA…SAPT, AIKA…HPSH, RVLQ…SRNV, and DMAA…RFDN.

Oligomeric complex that consists of at least the alpha, beta, beta', gamma, delta, epsilon and zeta subunits.

It is found in the cytoplasm. It localises to the golgi apparatus membrane. Its subcellular location is the cytoplasmic vesicle. The protein localises to the COPI-coated vesicle membrane. In terms of biological role, the coatomer is a cytosolic protein complex that binds to dilysine motifs and reversibly associates with Golgi non-clathrin-coated vesicles, which further mediate biosynthetic protein transport from the ER, via the Golgi up to the trans Golgi network. Coatomer complex is required for budding from Golgi membranes, and is essential for the retrograde Golgi-to-ER transport of dilysine-tagged proteins. The protein is Coatomer subunit beta (COPB1) of Gallus gallus (Chicken).